A 178-amino-acid chain; its full sequence is Large ribosomal subunit protein bL25 (178 aa).

It belongs to the bacterial ribosomal protein bL25 family. CTC subfamily. Part of the 50S ribosomal subunit; part of the 5S rRNA/L5/L18/L25 subcomplex. Contacts the 5S rRNA. Binds to the 5S rRNA independently of L5 and L18.

In terms of biological role, this is one of the proteins that binds to the 5S RNA in the ribosome where it forms part of the central protuberance. The polypeptide is Large ribosomal subunit protein bL25 (Campylobacter jejuni subsp. jejuni serotype O:23/36 (strain 81-176)).